The primary structure comprises 481 residues: NADH-quinone oxidoreductase subunit N (481 aa).

Transmembrane regions (helical) follow at residues 14–34 (LILS…GDGF), 38–57 (IGWG…TGPA), 76–96 (FAKL…PGFF), 108–128 (PVLI…GDLL), 162–182 (FVLG…LYGF), 204–224 (MFGM…VPFH), 235–255 (PTPV…ALLL), 272–292 (IVVF…IGQT), 297–317 (LLAY…AAGS), 323–343 (ATMT…ICVL), 369–389 (LAAA…LFGF), 403–423 (GFWP…FYYL), and 449–469 (GLIT…IPLL).

The protein belongs to the complex I subunit 2 family. As to quaternary structure, NDH-1 is composed of 14 different subunits. Subunits NuoA, H, J, K, L, M, N constitute the membrane sector of the complex.

The protein localises to the cell inner membrane. The catalysed reaction is a quinone + NADH + 5 H(+)(in) = a quinol + NAD(+) + 4 H(+)(out). Its function is as follows. NDH-1 shuttles electrons from NADH, via FMN and iron-sulfur (Fe-S) centers, to quinones in the respiratory chain. The immediate electron acceptor for the enzyme in this species is believed to be ubiquinone. Couples the redox reaction to proton translocation (for every two electrons transferred, four hydrogen ions are translocated across the cytoplasmic membrane), and thus conserves the redox energy in a proton gradient. The polypeptide is NADH-quinone oxidoreductase subunit N (Rhizorhabdus wittichii (strain DSM 6014 / CCUG 31198 / JCM 15750 / NBRC 105917 / EY 4224 / RW1) (Sphingomonas wittichii)).